The primary structure comprises 104 residues: Large ribosomal subunit protein bL21 (104 aa).

The protein belongs to the bacterial ribosomal protein bL21 family. Part of the 50S ribosomal subunit. Contacts protein L20.

This protein binds to 23S rRNA in the presence of protein L20. In Streptococcus mutans serotype c (strain ATCC 700610 / UA159), this protein is Large ribosomal subunit protein bL21.